We begin with the raw amino-acid sequence, 260 residues long: 3-dehydroquinate dehydratase (260 aa).

3-dehydroquinate-binding positions include 50–52 and Arg86; that span reads EWR. The Proton donor/acceptor role is filled by His148. Residue Lys175 is the Schiff-base intermediate with substrate of the active site. 3-dehydroquinate is bound by residues Arg217, Ser236, and Gln240.

Belongs to the type-I 3-dehydroquinase family. In terms of assembly, homodimer.

The catalysed reaction is 3-dehydroquinate = 3-dehydroshikimate + H2O. It functions in the pathway metabolic intermediate biosynthesis; chorismate biosynthesis; chorismate from D-erythrose 4-phosphate and phosphoenolpyruvate: step 3/7. Functionally, involved in the third step of the chorismate pathway, which leads to the biosynthesis of aromatic amino acids. Catalyzes the cis-dehydration of 3-dehydroquinate (DHQ) and introduces the first double bond of the aromatic ring to yield 3-dehydroshikimate. This Aromatoleum aromaticum (strain DSM 19018 / LMG 30748 / EbN1) (Azoarcus sp. (strain EbN1)) protein is 3-dehydroquinate dehydratase.